The following is a 362-amino-acid chain: Aminomethyltransferase (362 aa).

It belongs to the GcvT family. The glycine cleavage system is composed of four proteins: P, T, L and H.

The enzyme catalyses N(6)-[(R)-S(8)-aminomethyldihydrolipoyl]-L-lysyl-[protein] + (6S)-5,6,7,8-tetrahydrofolate = N(6)-[(R)-dihydrolipoyl]-L-lysyl-[protein] + (6R)-5,10-methylene-5,6,7,8-tetrahydrofolate + NH4(+). The glycine cleavage system catalyzes the degradation of glycine. This is Aminomethyltransferase from Chloroherpeton thalassium (strain ATCC 35110 / GB-78).